The sequence spans 269 residues: UPF0162 protein BU173 (269 aa).

This sequence belongs to the UPF0162 family.

This chain is UPF0162 protein BU173, found in Buchnera aphidicola subsp. Acyrthosiphon pisum (strain APS) (Acyrthosiphon pisum symbiotic bacterium).